Here is a 93-residue protein sequence, read N- to C-terminus: Phosphoribosyl-ATP pyrophosphatase (93 aa).

Belongs to the PRA-PH family.

The protein localises to the cytoplasm. It carries out the reaction 1-(5-phospho-beta-D-ribosyl)-ATP + H2O = 1-(5-phospho-beta-D-ribosyl)-5'-AMP + diphosphate + H(+). It functions in the pathway amino-acid biosynthesis; L-histidine biosynthesis; L-histidine from 5-phospho-alpha-D-ribose 1-diphosphate: step 2/9. The protein is Phosphoribosyl-ATP pyrophosphatase of Mycobacterium avium (strain 104).